Reading from the N-terminus, the 230-residue chain is LexA repressor (230 aa).

Residues 28–48 (LREIGAHMGIRSTNGVNDHLR) constitute a DNA-binding region (H-T-H motif). Active-site for autocatalytic cleavage activity residues include Ser-149 and Lys-186.

The protein belongs to the peptidase S24 family. In terms of assembly, homodimer.

It catalyses the reaction Hydrolysis of Ala-|-Gly bond in repressor LexA.. Represses a number of genes involved in the response to DNA damage (SOS response), including recA and lexA. In the presence of single-stranded DNA, RecA interacts with LexA causing an autocatalytic cleavage which disrupts the DNA-binding part of LexA, leading to derepression of the SOS regulon and eventually DNA repair. This chain is LexA repressor, found in Sorangium cellulosum (strain So ce56) (Polyangium cellulosum (strain So ce56)).